We begin with the raw amino-acid sequence, 2541 residues long: Talin-1 (2541 aa).

One can recognise an FERM domain in the interval Arg-86 to Lys-403. The interval Phe-280–Gln-435 is interaction with LAYN. The helical bundle R1 stretch occupies residues Arg-482–Ile-655. Positions Gly-656–Lys-786 are helical bundle R2. The helical bundle R3 stretch occupies residues Gln-787 to Lys-911. The tract at residues Leu-913 to Ala-1043 is helical bundle R4. The segment at Gly-1045–Gln-1205 is helical bundle R5. The interval Arg-1206–Ala-1356 is helical bundle R6. A helical bundle R7A region spans residues Pro-1357 to Asn-1452. The interval Gly-1358–Arg-1658 is interaction with VCL and F-actin. The segment at Leu-1460–Glu-1579 is helical bundle R8. An O-linked (GlcNAc) threonine glycan is attached at Thr-1486. The segment at Phe-1580–Asp-1652 is helical bundle R7B. The tract at residues Ala-1654 to Gly-1821 is helical bundle R9. The interval Val-1822 to Arg-1972 is helical bundle R10. The O-linked (GlcNAc) threonine glycan is linked to Thr-1889. A helical bundle R11 region spans residues Gly-1973–Thr-2139. A helical bundle R12 region spans residues Lys-2140–Glu-2293. Residues Thr-2292–Leu-2531 enclose the I/LWEQ domain. The tract at residues Asp-2299–Asp-2481 is helical bundle R13.

As to quaternary structure, interacts with PIP5K1C and NRAP. Binds with high affinity to vinculin VCL and with low affinity to integrins. Interacts with APBB1IP; this inhibits VCL binding. Interacts with F-actin. Interacts with LAYN. Interacts with THSD1. Phosphorylated.

The protein localises to the cell projection. Its subcellular location is the ruffle membrane. It localises to the cytoplasm. It is found in the cytoskeleton. The protein resides in the cell surface. The protein localises to the cell junction. Its subcellular location is the focal adhesion. Functionally, high molecular weight cytoskeletal protein concentrated at regions of cell-substratum contact and, in lymphocytes, at cell-cell contacts. Involved in connections of major cytoskeletal structures to the plasma membrane. The chain is Talin-1 (TLN1) from Gallus gallus (Chicken).